The chain runs to 588 residues: Aspartate--tRNA ligase (588 aa).

Position 174 (Glu-174) interacts with L-aspartate. Residues 198 to 201 (QLFK) are aspartate. Arg-220 contributes to the L-aspartate binding site. ATP-binding positions include 220–222 (RDE) and Gln-229. His-448 contacts L-aspartate. Residue Glu-482 coordinates ATP. Residue Arg-489 participates in L-aspartate binding. 534 to 537 (GIDR) lines the ATP pocket.

The protein belongs to the class-II aminoacyl-tRNA synthetase family. Type 1 subfamily. As to quaternary structure, homodimer.

The protein resides in the cytoplasm. The catalysed reaction is tRNA(Asp) + L-aspartate + ATP = L-aspartyl-tRNA(Asp) + AMP + diphosphate. Functionally, catalyzes the attachment of L-aspartate to tRNA(Asp) in a two-step reaction: L-aspartate is first activated by ATP to form Asp-AMP and then transferred to the acceptor end of tRNA(Asp). This chain is Aspartate--tRNA ligase, found in Xanthomonas campestris pv. campestris (strain B100).